The primary structure comprises 97 residues: Large ribosomal subunit protein eL37 (97 aa).

K10 carries the N6-acetyllysine modification. Zn(2+)-binding residues include C19, C22, C34, and C37. Residues 19 to 37 (CRRCGSKAYHLQKSTCGKC) form a C4-type zinc finger. Phosphoserine is present on residues S96 and S97.

This sequence belongs to the eukaryotic ribosomal protein eL37 family. As to quaternary structure, component of the large ribosomal subunit.

The protein localises to the cytoplasm. Functionally, component of the large ribosomal subunit. The ribosome is a large ribonucleoprotein complex responsible for the synthesis of proteins in the cell. The sequence is that of Large ribosomal subunit protein eL37 (RPL37) from Bos taurus (Bovine).